Here is a 164-residue protein sequence, read N- to C-terminus: General odorant-binding protein 1 (164 aa).

The first 19 residues, 1–19 (MPGVLRALLLLAAAAPLLA), serve as a signal peptide directing secretion. Cystine bridges form between C38/C73, C69/C127, and C116/C136.

This sequence belongs to the PBP/GOBP family. In terms of tissue distribution, antenna.

In terms of biological role, present in the aqueous fluid surrounding olfactory sensory dendrites and are thought to aid in the capture and transport of hydrophobic odorants into and through this fluid. The protein is General odorant-binding protein 1 of Heliothis virescens (Tobacco budworm moth).